Here is a 472-residue protein sequence, read N- to C-terminus: Pentatricopeptide repeat-containing protein At3g18970 (472 aa).

PPR repeat units lie at residues 107 to 139 (NERT…MVKK), 146 to 180 (SELI…TSVT), 181 to 216 (WNAM…GSGV), 219 to 253 (TDTT…GFTP), 256 to 286 (DVFI…MKVK), 287 to 321 (NVFT…GIKP), 322 to 352 (NEIT…MKTR), and 358 to 388 (VIEH…MPIK). The tract at residues 393-472 (LLRSLCNACS…IKTRPGYSFV (80 aa)) is type E motif; degenerate.

It belongs to the PPR family. PCMP-E subfamily.

The chain is Pentatricopeptide repeat-containing protein At3g18970 (PCMP-E93) from Arabidopsis thaliana (Mouse-ear cress).